Consider the following 861-residue polypeptide: DNA mismatch repair protein MutS (861 aa).

Residue 618 to 625 participates in ATP binding; sequence GPNMGGKS.

It belongs to the DNA mismatch repair MutS family.

This protein is involved in the repair of mismatches in DNA. It is possible that it carries out the mismatch recognition step. This protein has a weak ATPase activity. The polypeptide is DNA mismatch repair protein MutS (Shewanella sp. (strain MR-7)).